Consider the following 106-residue polypeptide: UPF0145 protein Nmul_A0734 (106 aa).

Belongs to the UPF0145 family.

The chain is UPF0145 protein Nmul_A0734 from Nitrosospira multiformis (strain ATCC 25196 / NCIMB 11849 / C 71).